Reading from the N-terminus, the 270-residue chain is Putative hydro-lyase Reut_A2449 (270 aa).

This sequence belongs to the D-glutamate cyclase family.

The chain is Putative hydro-lyase Reut_A2449 from Cupriavidus pinatubonensis (strain JMP 134 / LMG 1197) (Cupriavidus necator (strain JMP 134)).